The chain runs to 638 residues: Threonine--tRNA ligase (638 aa).

A TGS domain is found at 1–61 (MPIITLPDGS…NSDSKVVIIT (61 aa)). The segment at 242–533 (DHRKLGKKHS…LIEQYEAKFP (292 aa)) is catalytic. Zn(2+) is bound by residues Cys-333, His-384, and His-510.

Belongs to the class-II aminoacyl-tRNA synthetase family. As to quaternary structure, homodimer. It depends on Zn(2+) as a cofactor.

It localises to the cytoplasm. The catalysed reaction is tRNA(Thr) + L-threonine + ATP = L-threonyl-tRNA(Thr) + AMP + diphosphate + H(+). Its function is as follows. Catalyzes the attachment of threonine to tRNA(Thr) in a two-step reaction: L-threonine is first activated by ATP to form Thr-AMP and then transferred to the acceptor end of tRNA(Thr). Also edits incorrectly charged L-seryl-tRNA(Thr). The chain is Threonine--tRNA ligase from Prochlorococcus marinus (strain MIT 9215).